We begin with the raw amino-acid sequence, 941 residues long: Ankyrin repeat and MYND domain-containing protein 1 (941 aa).

MORN repeat units follow at residues 2-24 (YQGE…TGES), 25-47 (YHGQ…DGSS), and 70-92 (FQGL…DGSQ). ANK repeat units lie at residues 292–321 (KGYT…DVNK), 513–542 (MRRM…DPNL), 545–574 (VPMQ…RTDI), 581–613 (STLT…DVDA), 657–691 (GGRT…NPNL), 694–723 (SGHS…DPNL), and 737–766 (CDLT…DILK). Cys-880, Cys-883, Cys-894, Cys-897, Cys-903, Cys-907, His-916, and Cys-920 together coordinate Zn(2+). An MYND-type zinc finger spans residues 880-920 (CYQCGRSIGVRLLPCPRCYGILTCSKYCKTKAWTEFHKKDC).

The protein is Ankyrin repeat and MYND domain-containing protein 1 (ANKMY1) of Homo sapiens (Human).